A 92-amino-acid chain; its full sequence is uncharacterized protein (92 aa).

This is an uncharacterized protein from Homo sapiens (Human).